The primary structure comprises 469 residues: Glutamate--tRNA ligase (469 aa).

Positions 12-22 (PSPTGFIHLGN) match the 'HIGH' region motif. A 'KMSKS' region motif is present at residues 244–248 (KMSKR). K247 is a binding site for ATP.

It belongs to the class-I aminoacyl-tRNA synthetase family. Glutamate--tRNA ligase type 1 subfamily. As to quaternary structure, monomer.

It is found in the cytoplasm. The catalysed reaction is tRNA(Glu) + L-glutamate + ATP = L-glutamyl-tRNA(Glu) + AMP + diphosphate. Functionally, catalyzes the attachment of glutamate to tRNA(Glu) in a two-step reaction: glutamate is first activated by ATP to form Glu-AMP and then transferred to the acceptor end of tRNA(Glu). The protein is Glutamate--tRNA ligase of Acidovorax sp. (strain JS42).